A 335-amino-acid chain; its full sequence is Luciferase-like monooxygenase (335 aa).

The protein to bacterial alkanal monooxygenase alpha and beta chains.

The polypeptide is Luciferase-like monooxygenase (yhbW) (Escherichia coli O6:H1 (strain CFT073 / ATCC 700928 / UPEC)).